The sequence spans 258 residues: Imidazole glycerol phosphate synthase subunit HisF (258 aa).

Active-site residues include aspartate 11 and aspartate 130.

It belongs to the HisA/HisF family. Heterodimer of HisH and HisF.

It is found in the cytoplasm. It catalyses the reaction 5-[(5-phospho-1-deoxy-D-ribulos-1-ylimino)methylamino]-1-(5-phospho-beta-D-ribosyl)imidazole-4-carboxamide + L-glutamine = D-erythro-1-(imidazol-4-yl)glycerol 3-phosphate + 5-amino-1-(5-phospho-beta-D-ribosyl)imidazole-4-carboxamide + L-glutamate + H(+). It functions in the pathway amino-acid biosynthesis; L-histidine biosynthesis; L-histidine from 5-phospho-alpha-D-ribose 1-diphosphate: step 5/9. IGPS catalyzes the conversion of PRFAR and glutamine to IGP, AICAR and glutamate. The HisF subunit catalyzes the cyclization activity that produces IGP and AICAR from PRFAR using the ammonia provided by the HisH subunit. This is Imidazole glycerol phosphate synthase subunit HisF from Photorhabdus laumondii subsp. laumondii (strain DSM 15139 / CIP 105565 / TT01) (Photorhabdus luminescens subsp. laumondii).